The chain runs to 540 residues: Cytochrome P450 monooxygenase ptmG (540 aa).

N-linked (GlcNAc...) asparagine glycosylation is present at Asn-17. The next 2 helical transmembrane spans lie at 20–40 (VMTL…YICI) and 325–345 (AAFL…FLLL). Position 474 (Cys-474) interacts with heme.

This sequence belongs to the cytochrome P450 family. Heme serves as cofactor.

The protein localises to the membrane. Its pathway is secondary metabolite biosynthesis. Cytochrome P450 monooxygenase; part of the gene cluster that mediates the biosynthesis of the indole diterpenes penitrems. The geranylgeranyl diphosphate (GGPP) synthase ptmG catalyzes the first step in penitrem biosynthesis via conversion of farnesyl pyrophosphate and isopentyl pyrophosphate into geranylgeranyl pyrophosphate (GGPP). Condensation of indole-3-glycerol phosphate with GGPP by the prenyl transferase ptmC then forms 3-geranylgeranylindole (3-GGI). Epoxidation by the FAD-dependent monooxygenase ptmM leads to a epoxidized-GGI that is substrate of the terpene cyclase ptmB for cyclization to yield paspaline. Paspaline is subsequently converted to 13-desoxypaxilline by the cytochrome P450 monooxygenase ptmP, the latter being then converted to paxilline by the cytochrome P450 monooxygenase ptmQ. Paxilline is converted to beta-paxitriol via C-10 ketoreduction by the short-chain dehydrogenase ptmH which can be monoprenylated at the C-20 by the indole diterpene prenyltransferase ptmD. A two-step elimination (acetylation and elimination) process performed by the O-acetyltransferase ptmV and ptmI leads to the production of the prenylated form of penijanthine. The FAD-linked oxidoreductase ptmO then converts the prenylated form of penijanthine into PC-M5 which is in turn transformed into PC-M4 by the aromatic dimethylallyltransferase ptmE. Five sequential oxidative transformations performed by the cytochrome P450 monooxygenases ptmK, ptmU, ptmL, ptmN and ptmJ yield the various penitrem compounds. PtmK, ptmU and ptmM are involved in the formation of the key bicyclic ring of penitrem C via the formation of the intermediates secopenitrem D and penitrem D. PtmL catalyzes the epoxidation of penitrem D and C to yield penitrem B and F, respectively. PtmJ catalyzes the last benzylic hydroxylation to convert penitrem B to prenitrem E and penitrem F to penitrem A. This chain is Cytochrome P450 monooxygenase ptmG, found in Penicillium ochrochloron.